The following is a 449-amino-acid chain: Ribosomal protein uS12 methylthiotransferase RimO (449 aa).

One can recognise an MTTase N-terminal domain in the interval Pro5–Asn116. Residues Cys14, Cys50, Cys79, Cys154, Cys158, and Cys161 each coordinate [4Fe-4S] cluster. The 230-residue stretch at Thr140 to Lys369 folds into the Radical SAM core domain. The TRAM domain occupies Gln372–Leu438.

This sequence belongs to the methylthiotransferase family. RimO subfamily. [4Fe-4S] cluster serves as cofactor.

The protein localises to the cytoplasm. It carries out the reaction L-aspartate(89)-[ribosomal protein uS12]-hydrogen + (sulfur carrier)-SH + AH2 + 2 S-adenosyl-L-methionine = 3-methylsulfanyl-L-aspartate(89)-[ribosomal protein uS12]-hydrogen + (sulfur carrier)-H + 5'-deoxyadenosine + L-methionine + A + S-adenosyl-L-homocysteine + 2 H(+). Its function is as follows. Catalyzes the methylthiolation of an aspartic acid residue of ribosomal protein uS12. This is Ribosomal protein uS12 methylthiotransferase RimO from Rippkaea orientalis (strain PCC 8801 / RF-1) (Cyanothece sp. (strain PCC 8801)).